The following is a 356-amino-acid chain: 4-hydroxybenzoate polyprenyltransferase, mitochondrial (356 aa).

The transit peptide at Met-1–Pro-44 directs the protein to the mitochondrion. 6 helical membrane passes run Val-71–Ala-91, Pro-93–Met-113, Ala-150–Trp-170, Trp-195–Leu-215, Trp-269–Asp-289, and Ile-332–Ile-352.

The protein belongs to the UbiA prenyltransferase family. Mg(2+) serves as cofactor.

Its subcellular location is the mitochondrion inner membrane. It catalyses the reaction an all-trans-polyprenyl diphosphate + 4-hydroxybenzoate = a 4-hydroxy-3-(all-trans-polyprenyl)benzoate + diphosphate. It functions in the pathway cofactor biosynthesis; ubiquinone biosynthesis. Functionally, catalyzes the prenylation of para-hydroxybenzoate (PHB) with an all-trans polyprenyl group. Mediates the second step in the final reaction sequence of coenzyme Q (CoQ) biosynthesis, which is the condensation of the polyisoprenoid side chain with PHB, generating the first membrane-bound Q intermediate. The polypeptide is 4-hydroxybenzoate polyprenyltransferase, mitochondrial (coq-2) (Caenorhabditis elegans).